A 729-amino-acid chain; its full sequence is Phosphoribosylformylglycinamidine synthase subunit PurL (729 aa).

His54 is an active-site residue. Residues Tyr57 and Lys96 each contribute to the ATP site. Glu98 contacts Mg(2+). Substrate is bound by residues 99-102 (SHNH) and Arg121. His100 serves as the catalytic Proton acceptor. Asp122 provides a ligand contact to Mg(2+). Gln245 provides a ligand contact to substrate. Asp273 provides a ligand contact to Mg(2+). 317-319 (ETQ) provides a ligand contact to substrate. Asp495 and Gly532 together coordinate ATP. Mg(2+) is bound at residue Asn533. Residue Ser535 coordinates substrate.

This sequence belongs to the FGAMS family. As to quaternary structure, monomer. Part of the FGAM synthase complex composed of 1 PurL, 1 PurQ and 2 PurS subunits.

It localises to the cytoplasm. The catalysed reaction is N(2)-formyl-N(1)-(5-phospho-beta-D-ribosyl)glycinamide + L-glutamine + ATP + H2O = 2-formamido-N(1)-(5-O-phospho-beta-D-ribosyl)acetamidine + L-glutamate + ADP + phosphate + H(+). It functions in the pathway purine metabolism; IMP biosynthesis via de novo pathway; 5-amino-1-(5-phospho-D-ribosyl)imidazole from N(2)-formyl-N(1)-(5-phospho-D-ribosyl)glycinamide: step 1/2. Part of the phosphoribosylformylglycinamidine synthase complex involved in the purines biosynthetic pathway. Catalyzes the ATP-dependent conversion of formylglycinamide ribonucleotide (FGAR) and glutamine to yield formylglycinamidine ribonucleotide (FGAM) and glutamate. The FGAM synthase complex is composed of three subunits. PurQ produces an ammonia molecule by converting glutamine to glutamate. PurL transfers the ammonia molecule to FGAR to form FGAM in an ATP-dependent manner. PurS interacts with PurQ and PurL and is thought to assist in the transfer of the ammonia molecule from PurQ to PurL. This Staphylococcus carnosus (strain TM300) protein is Phosphoribosylformylglycinamidine synthase subunit PurL.